The chain runs to 660 residues: tRNA 5-methylaminomethyl-2-thiouridine biosynthesis bifunctional protein MnmC (660 aa).

A tRNA (mnm(5)s(2)U34)-methyltransferase region spans residues 1 to 242 (MTDRIVPATL…KRAMLVGEFA (242 aa)). The FAD-dependent cmnm(5)s(2)U34 oxidoreductase stretch occupies residues 266-660 (IGAGLAGCAV…VRALRHGRVA (395 aa)).

This sequence in the N-terminal section; belongs to the methyltransferase superfamily. tRNA (mnm(5)s(2)U34)-methyltransferase family. The protein in the C-terminal section; belongs to the DAO family. Requires FAD as cofactor.

Its subcellular location is the cytoplasm. The enzyme catalyses 5-aminomethyl-2-thiouridine(34) in tRNA + S-adenosyl-L-methionine = 5-methylaminomethyl-2-thiouridine(34) in tRNA + S-adenosyl-L-homocysteine + H(+). In terms of biological role, catalyzes the last two steps in the biosynthesis of 5-methylaminomethyl-2-thiouridine (mnm(5)s(2)U) at the wobble position (U34) in tRNA. Catalyzes the FAD-dependent demodification of cmnm(5)s(2)U34 to nm(5)s(2)U34, followed by the transfer of a methyl group from S-adenosyl-L-methionine to nm(5)s(2)U34, to form mnm(5)s(2)U34. In Burkholderia pseudomallei (strain 1710b), this protein is tRNA 5-methylaminomethyl-2-thiouridine biosynthesis bifunctional protein MnmC.